The chain runs to 248 residues: Cell division protein ZapD (248 aa).

This sequence belongs to the ZapD family. Interacts with FtsZ.

The protein localises to the cytoplasm. In terms of biological role, cell division factor that enhances FtsZ-ring assembly. Directly interacts with FtsZ and promotes bundling of FtsZ protofilaments, with a reduction in FtsZ GTPase activity. The sequence is that of Cell division protein ZapD from Aliivibrio salmonicida (strain LFI1238) (Vibrio salmonicida (strain LFI1238)).